A 262-amino-acid polypeptide reads, in one-letter code: MNSKRDLAVAISFFVFGASVLYSLAHMQISPGVNEVYLTHYIIPNYVCAVIFDWRAYDTLGECLVLVVAVMVSWIVFGKSLYDNTYLKELFHAPESDDYITLQGWGEYTPIIKFLAFPMSVLMVALGIITVLGGHITPGGGFQGGALIAAAFILSVIAFGSNSPLWFDHKFLEKLEALGALGYLLLGVAGMFIGGYYLFNFTEINGFTIFPAPKEIITAGIIPYLNIAVGLKVLAGLSTAAFLLSCEKVIIEKISKSEEKLE.

Transmembrane regions (helical) follow at residues 7 to 27 (LAVAISFFVFGASVLYSLAHM), 58 to 78 (DTLGECLVLVVAVMVSWIVFG), 114 to 134 (FLAFPMSVLMVALGIITVLGG), 140 to 160 (GGFQGGALIAAAFILSVIAFG), 179 to 199 (GALGYLLLGVAGMFIGGYYLF), and 216 to 236 (IITAGIIPYLNIAVGLKVLAG).

Its subcellular location is the cell membrane. This is an uncharacterized protein from Methanocaldococcus jannaschii (strain ATCC 43067 / DSM 2661 / JAL-1 / JCM 10045 / NBRC 100440) (Methanococcus jannaschii).